The following is a 78-amino-acid chain: TauPI-stichotoxin-Hcr2b (78 aa).

Positions 1-22 (MKGTFLICLILIAGFSFKSTQA) are cleaved as a signal peptide. Positions 26-76 (CLEPKVVGPCTAYFRRFYFDSETGKCTVFIYGGCEGNGNNFETLRACRAIC) constitute a BPTI/Kunitz inhibitor domain. 3 cysteine pairs are disulfide-bonded: Cys26-Cys76, Cys35-Cys59, and Cys51-Cys72.

Belongs to the venom Kunitz-type family. Sea anemone type 2 potassium channel toxin subfamily.

The protein localises to the secreted. It is found in the nematocyst. Functionally, this protease inhibitor shows two different activities, it inhibits both the capsaicin receptor TRPV1 and serine proteases. It partially (max 50%) and reversibly inhibits capsaicin-induced response of TRPV1 (IC(50)=54 nM), a receptor of the pain pathway. The second activity is a weak inhibition of trypsin and chymotrypsin activity (Ki=1 uM and Ki=5 uM, respectively). In vivo, it shows antinociceptive and analgesic activities. It significantly prolongs tail-flick latency and reduces capsaicin-induced acute pain. In vivo, unlike other TRPV1 antagonists whose activity is associated with hyperthermia, this protein has the remarkable feature of dropping core body temperature. The sequence is that of TauPI-stichotoxin-Hcr2b from Radianthus crispa (Leathery sea anemone).